A 69-amino-acid chain; its full sequence is Large ribosomal subunit protein uL29 (69 aa).

Belongs to the universal ribosomal protein uL29 family.

In Polaromonas sp. (strain JS666 / ATCC BAA-500), this protein is Large ribosomal subunit protein uL29.